Reading from the N-terminus, the 465-residue chain is Casein kinase 1-like protein 2 (465 aa).

Residues 9 to 277 (FRLGRKIGGG…LKRLFRDLFI (269 aa)) enclose the Protein kinase domain. ATP-binding positions include 15-23 (IGGGSFGEI) and K38. D128 (proton acceptor) is an active-site residue. Disordered regions lie at residues 300-344 (STPP…GIPR) and 396-428 (REAA…VSRN). Polar residues predominate over residues 405 to 428 (SEPSNPQIVEAGSGSNSKIPVSRN).

This sequence belongs to the protein kinase superfamily. CK1 Ser/Thr protein kinase family. Casein kinase I subfamily. Monomer. In terms of processing, autophosphorylated.

The protein localises to the cytoplasm. Its subcellular location is the nucleus. The enzyme catalyses L-seryl-[protein] + ATP = O-phospho-L-seryl-[protein] + ADP + H(+). The catalysed reaction is L-threonyl-[protein] + ATP = O-phospho-L-threonyl-[protein] + ADP + H(+). In terms of biological role, casein kinases are operationally defined by their preferential utilization of acidic proteins such as caseins as substrates. It can phosphorylate a large number of proteins. The polypeptide is Casein kinase 1-like protein 2 (Arabidopsis thaliana (Mouse-ear cress)).